A 283-amino-acid chain; its full sequence is Polyamine aminopropyltransferase (283 aa).

The region spanning E2 to K237 is the PABS domain. Q31 is a binding site for S-methyl-5'-thioadenosine. The spermidine site is built by H62 and D86. S-methyl-5'-thioadenosine is bound by residues E106 and D137–G138. D155 acts as the Proton acceptor in catalysis. D155–D158 is a spermidine binding site. P162 lines the S-methyl-5'-thioadenosine pocket.

Belongs to the spermidine/spermine synthase family. Homodimer or homotetramer.

Its subcellular location is the cytoplasm. The catalysed reaction is S-adenosyl 3-(methylsulfanyl)propylamine + putrescine = S-methyl-5'-thioadenosine + spermidine + H(+). It participates in amine and polyamine biosynthesis; spermidine biosynthesis; spermidine from putrescine: step 1/1. In terms of biological role, catalyzes the irreversible transfer of a propylamine group from the amino donor S-adenosylmethioninamine (decarboxy-AdoMet) to putrescine (1,4-diaminobutane) to yield spermidine. The chain is Polyamine aminopropyltransferase from Clostridium perfringens (strain ATCC 13124 / DSM 756 / JCM 1290 / NCIMB 6125 / NCTC 8237 / Type A).